Reading from the N-terminus, the 2222-residue chain is Protein SWEETIE (2222 aa).

HEAT repeat units follow at residues 37–75 (LLCF…LVTL), 228–265 (SEFD…LGMH), 331–368 (SELQ…GVID), 510–540 (PARL…SEKE), 541–578 (AGWL…GNPE), 611–648 (CNDG…LVDI), 768–807 (QGML…GLKA), 898–936 (MALS…TIEA), 968–1008 (QGIG…WQEI), and 1029–1066 (VSVH…KDPV). Positions 1133–1165 (IAENDPAYTRENLGDDDEDMVSSSSGKSIRANP) are disordered. HEAT repeat units lie at residues 1238–1269 (MRPI…LLEQ), 1270–1306 (YQAQ…TSGI), 1312–1354 (VAVK…AHAS), 1372–1410 (VEFE…NLKK), 1434–1474 (EAWP…LEAE), 1550–1586 (DLCQ…NCPK), 1783–1820 (VMLK…RYNN), 1836–1874 (GDIV…HSIT), 1880–1917 (GFMS…LVSH), and 1966–2006 (AMDI…QVST). The interval 1992 to 2203 (EALSTMPTSF…DESSKEHVGA (212 aa)) is disordered. The span at 1996 to 2009 (TMPTSFNQVSTVES) shows a compositional bias: polar residues. A compositionally biased stretch (acidic residues) spans 2010-2027 (GTDEEEEEEEDDDDDDWD). Residues 2028–2040 (TFQSFPASTNLEG) show a composition bias toward polar residues. Acidic residues predominate over residues 2062–2072 (QDDESNAEETD). 2 stretches are compositionally biased toward basic and acidic residues: residues 2073-2096 (DQHL…SKEV) and 2108-2124 (TRED…EETV). Residues 2150 to 2164 (NEQSVESKNLESENI) are compositionally biased toward polar residues. Residues 2191-2202 (SPEDESSKEHVG) are compositionally biased toward basic and acidic residues.

It belongs to the HEATR5 family.

May regulate multiple metabolic, hormonal and stress-related pathways. Required for carbohydrate metabolism and homoeostasis. May also monitor ethylene biosynthesis and senescence. The polypeptide is Protein SWEETIE (Arabidopsis thaliana (Mouse-ear cress)).